Consider the following 662-residue polypeptide: Translation factor guf1, mitochondrial (662 aa).

The N-terminal 42 residues, 1–42 (MRGCLQLARWLSAAPNWPASSLLKAPGSSFATRLFTTTSSYK), are a transit peptide targeting the mitochondrion. The tr-type G domain maps to 64-244 (ERYRNFCIVA…TVVEKIPAPI (181 aa)). GTP contacts are provided by residues 73-80 (AHVDHGKS), 137-141 (DTPGH), and 191-194 (NKVD).

This sequence belongs to the TRAFAC class translation factor GTPase superfamily. Classic translation factor GTPase family. LepA subfamily.

It localises to the mitochondrion inner membrane. The enzyme catalyses GTP + H2O = GDP + phosphate + H(+). Functionally, promotes mitochondrial protein synthesis. May act as a fidelity factor of the translation reaction, by catalyzing a one-codon backward translocation of tRNAs on improperly translocated ribosomes. Binds to mitochondrial ribosomes in a GTP-dependent manner. This is Translation factor guf1, mitochondrial (guf1) from Emericella nidulans (strain FGSC A4 / ATCC 38163 / CBS 112.46 / NRRL 194 / M139) (Aspergillus nidulans).